A 357-amino-acid polypeptide reads, in one-letter code: Peptide chain release factor 1 (357 aa).

Position 236 is an N5-methylglutamine (glutamine 236).

Belongs to the prokaryotic/mitochondrial release factor family. Methylated by PrmC. Methylation increases the termination efficiency of RF1.

It is found in the cytoplasm. Peptide chain release factor 1 directs the termination of translation in response to the peptide chain termination codons UAG and UAA. The protein is Peptide chain release factor 1 of Mycolicibacterium paratuberculosis (strain ATCC BAA-968 / K-10) (Mycobacterium paratuberculosis).